Reading from the N-terminus, the 312-residue chain is TATA box-binding protein-like 2 (312 aa).

A disordered region spans residues 65–115 (DELSTQDEPSQVEKESKNEDSGIYTDCPQKESTQADIDTSNSAQNTSQFNL). The span at 75-84 (QVEKESKNED) shows a compositional bias: basic and acidic residues. Positions 94–115 (KESTQADIDTSNSAQNTSQFNL) are enriched in polar residues.

This sequence belongs to the TBP family. In terms of tissue distribution, in adults, expressed in the gonads, with expression much higher in the ovary than the testis (at protein level). Shows a small amount of expression in other adult organs, including the brain and kidney. Embryonic expression is mostly ubiquitous except in early gastrula embryos where expression is asymmetric.

Its subcellular location is the nucleus. In terms of biological role, TATA box-binding transcription factor. Members of the TBP family are differentially required to regulate transcription and development during early embryogenesis. Commits mesoderm to the hematopoietic lineage during hemopoiesis, acting via mespa. Binds to the mespa promoter. This is TATA box-binding protein-like 2 from Danio rerio (Zebrafish).